The primary structure comprises 545 residues: Chaperonin GroEL (545 aa).

ATP contacts are provided by residues 29 to 32 (TLGP), K50, 86 to 90 (DGTTT), G413, and D495.

Belongs to the chaperonin (HSP60) family. In terms of assembly, forms a cylinder of 14 subunits composed of two heptameric rings stacked back-to-back. Interacts with the co-chaperonin GroES.

It is found in the cytoplasm. The catalysed reaction is ATP + H2O + a folded polypeptide = ADP + phosphate + an unfolded polypeptide.. Its function is as follows. Together with its co-chaperonin GroES, plays an essential role in assisting protein folding. The GroEL-GroES system forms a nano-cage that allows encapsulation of the non-native substrate proteins and provides a physical environment optimized to promote and accelerate protein folding. This is Chaperonin GroEL from Borreliella burgdorferi (strain ATCC 35210 / DSM 4680 / CIP 102532 / B31) (Borrelia burgdorferi).